We begin with the raw amino-acid sequence, 394 residues long: MSKAKFERKKPHLNVGTIGHVDHGKTTLTAAISAVLTKAHGGEVKDFASIDNAPEERERGITINTSHIEYDTDTRHYAHVDCPGHADYVKNMITGAAQMDAGILVVAATDGPMPQTREHILLSRQVGVPHLIVFMNKCDMVDDEELLELVEMEVRELLSEYDFPGDDLPVIQGSALKALEGDPVWEAKVMELADALDTYIPLPERDIDKPFILPIEDVFSIAGRGTVVTGRVERGIIKVGQEVEIIGLRPTVKTTCTGVEMFRKLLDEGRAGENVGILLRGTKRDDVERGQVLAKPGSIKPHTKFEGEVYILSKDEGGRHTPFFKGYRPQFFFRTTDITGAVELPEGVEMVMPGDNLKFVVDLIGPVAMDEGLRFAIREGGRTVGAGVVSKIIE.

A tr-type G domain is found at Lys-10–Glu-204. Residues Gly-19–Thr-26 are G1. Gly-19 to Thr-26 lines the GTP pocket. Thr-26 contributes to the Mg(2+) binding site. Residues Gly-60–Asn-64 are G2. Residues Asp-81 to Gly-84 form a G3 region. GTP is bound by residues Asp-81–His-85 and Asn-136–Asp-139. A G4 region spans residues Asn-136–Asp-139. Positions Ser-174–Leu-176 are G5.

This sequence belongs to the TRAFAC class translation factor GTPase superfamily. Classic translation factor GTPase family. EF-Tu/EF-1A subfamily. Monomer.

It localises to the cytoplasm. It catalyses the reaction GTP + H2O = GDP + phosphate + H(+). In terms of biological role, GTP hydrolase that promotes the GTP-dependent binding of aminoacyl-tRNA to the A-site of ribosomes during protein biosynthesis. This is Elongation factor Tu from Psychromonas ingrahamii (strain DSM 17664 / CCUG 51855 / 37).